We begin with the raw amino-acid sequence, 350 residues long: MFVDNIRIFARAGKGGNGLVSFRRAKFVPKGGPDGGDGGDGGSVILEVDPHTNDLRSFFYDPKLIATDGVGGQSAKKHGKNGKSVIGKVPPGTIIYRSNASSMAEATWLEREGEGIELEKIADLTEIGTRFTLCQGGLGGKGNWHFRSATNQAPTEAEMGTEGEEGVFFMELRRIADAGLVGYPNAGKSTLLGDISEAKPKVASYPFTTLQPIIGVVEFDSFRRCVVADIPGIIEGAHNNRGLGHEFLRHITRCKVLVFVLDMAGSEGRDPIEDLQNLRTEIKLYSEDLAKQPWFVVANKMDLEGAEENLANFRMRFPKVDIIPISALNGDGISRLRNRLDELVGYKFIR.

The Obg domain occupies 1–175 (MFVDNIRIFA…GVFFMELRRI (175 aa)). The 170-residue stretch at 176–345 (ADAGLVGYPN…LRNRLDELVG (170 aa)) folds into the OBG-type G domain. GTP-binding positions include 182-189 (GYPNAGKS), 207-211 (FTTLQ), 229-232 (DIPG), 299-302 (NKMD), and 326-328 (SAL). Residues S189 and T209 each contribute to the Mg(2+) site.

The protein belongs to the TRAFAC class OBG-HflX-like GTPase superfamily. OBG GTPase family. Monomer. It depends on Mg(2+) as a cofactor.

It localises to the cytoplasm. In terms of biological role, an essential GTPase which binds GTP, GDP and possibly (p)ppGpp with moderate affinity, with high nucleotide exchange rates and a fairly low GTP hydrolysis rate. Plays a role in control of the cell cycle, stress response, ribosome biogenesis and in those bacteria that undergo differentiation, in morphogenesis control. The sequence is that of GTPase Obg from Akkermansia muciniphila (strain ATCC BAA-835 / DSM 22959 / JCM 33894 / BCRC 81048 / CCUG 64013 / CIP 107961 / Muc).